The following is a 349-amino-acid chain: Single-stranded TG1-3 DNA-binding protein (349 aa).

The region spanning 45 to 127 is the RRM 1 domain; the sequence is FRVFVGRLST…REIVVQKARP (83 aa). 2 disordered regions span residues 121-208 and 298-349; these read VVQK…PNSI and EDKQ…AITA. The residue at position 152 (Ser-152) is a Phosphoserine. Over residues 168–179 the composition is skewed to polar residues; sequence ANTATAPSSNEA. The span at 181-191 shows a compositional bias: basic and acidic residues; it reads GVDKKQNEIKG. An RRM 2 domain is found at 206-296; it reads NSIYVSGLSV…LTLVVKSAVF (91 aa). 2 stretches are compositionally biased toward basic and acidic residues: residues 298–310 and 327–340; these read EDKQ…KNEN and TEPK…EEKS.

It localises to the cytoplasm. It is found in the nucleus. The protein localises to the chromosome. The protein resides in the telomere. In terms of biological role, binds single-stranded telomeric sequences of the type (TG[1-3])n in vitro. Has a role in meiosis. The polypeptide is Single-stranded TG1-3 DNA-binding protein (tcg1) (Schizosaccharomyces pombe (strain 972 / ATCC 24843) (Fission yeast)).